Reading from the N-terminus, the 452-residue chain is Probable diguanylate cyclase DgcT (452 aa).

At 1–7 (MEKDYLR) the chain is on the cytoplasmic side. Residues 8-28 (ISSTVLVSLLFGLALVLVNSW) traverse the membrane as a helical segment. The Periplasmic segment spans residues 29–45 (FNQPGVEEVVPRSTYLM). A helical transmembrane segment spans residues 46 to 66 (VMIALFFIDTVAFIFMQLYFI). The Cytoplasmic segment spans residues 67 to 74 (YDRRQFSN). Residues 75 to 95 (CVLSLAFLSCLIYFVITVIII) form a helical membrane-spanning segment. Residues 96 to 111 (QQIIEERLTSSVVQND) lie on the Periplasmic side of the membrane. Residues 112–132 (IAIYYLFRQMSLCILIFLALV) traverse the membrane as a helical segment. Over 133–148 (NKVSENTKQRNLFSKK) the chain is Cytoplasmic. Residues 149 to 169 (MTLCISLFFVFGGPIVAHILS) form a helical membrane-spanning segment. At 170-195 (SHYESYNLHIAELTNENGQVVWKASY) the chain is on the periplasmic side. A helical transmembrane segment spans residues 196–216 (VTIMIFMWLTLLSVNLYFNGL). Topologically, residues 217 to 219 (RYD) are cytoplasmic. A helical membrane pass occupies residues 220 to 240 (IWNGVTVIAFCAVLYNISLLF). Topologically, residues 241-254 (MSRYSVSTWYISRT) are periplasmic. The chain crosses the membrane as a helical span at residues 255-275 (IEVVSKLTVMVIFMCHIFSAL). Residues 276–452 (RVTKNIAHRD…RDVVNFCESP (177 aa)) lie on the Cytoplasmic side of the membrane. One can recognise a GGDEF domain in the interval 310 to 445 (TPYCVMIMDI…GRNKVVVRDV (136 aa)). Residues aspartate 318 and isoleucine 319 each coordinate Mg(2+). The substrate site is built by asparagine 326, histidine 331, and aspartate 335. A Mg(2+)-binding site is contributed by glutamate 361. Glutamate 361 (proton acceptor) is an active-site residue. Arginine 381 is a binding site for substrate.

Homodimer. Mg(2+) serves as cofactor.

The protein resides in the cell inner membrane. The catalysed reaction is 2 GTP = 3',3'-c-di-GMP + 2 diphosphate. It participates in purine metabolism; 3',5'-cyclic di-GMP biosynthesis. Its function is as follows. Probably catalyzes the synthesis of cyclic-di-GMP (c-di-GMP) via the condensation of 2 GTP molecules. Overexpression leads to a strong repression of swimming; swimming returns to normal when residues 359-360 are both mutated to Ala. Overexpression also leads to a 20-fold increase in c-di-GMP levels in vivo. Cyclic-di-GMP is a second messenger which controls cell surface-associated traits in bacteria. The protein is Probable diguanylate cyclase DgcT of Escherichia coli (strain K12).